A 118-amino-acid chain; its full sequence is Class II hydrophobin CRP (118 aa).

The signal sequence occupies residues 1–22 (MQFSIIAISFLASLAMASPAKR). The tract at residues 20–46 (AKRGGGGGGSGSGSGSGSGSGSGGGST) is disordered. The span at 22 to 45 (RGGGGGGSGSGSGSGSGSGSGGGS) shows a compositional bias: gly residues. 7 tandem repeats follow at residues 29 to 30 (SG), 31 to 32 (SG), 33 to 34 (SG), 35 to 36 (SG), 37 to 38 (SG), 39 to 40 (SG), and 41 to 42 (SG). The 7 X 2 AA tandem repeats of S-G stretch occupies residues 29-42 (SGSGSGSGSGSGSG). Intrachain disulfides connect C51/C100, C61/C91, C62/C74, and C101/C112.

The protein belongs to the cerato-ulmin hydrophobin family. As to quaternary structure, homotetramer. Further self-assembles to form highly ordered films at water-air interfaces through intermolecular interactions.

The protein localises to the secreted. It is found in the cell wall. Functionally, aerial growth, conidiation, and dispersal of filamentous fungi in the environment rely upon a capability of their secreting small amphipathic proteins called hydrophobins (HPBs) with low sequence identity. Class I can self-assemble into an outermost layer of rodlet bundles on aerial cell surfaces, conferring cellular hydrophobicity that supports fungal growth, development and dispersal; whereas Class II form highly ordered films at water-air interfaces through intermolecular interactions but contribute nothing to the rodlet structure. Cryparin is a class II hydrophobin that is the most abundant protein produced by this fungus when grown in liquid culture and that plays an essential role in the fitness of this important plant pathogen by facilitating the eruption of the fungal fruiting bodies through the bark of its host tree. This chain is Class II hydrophobin CRP, found in Cryphonectria parasitica (Chestnut blight fungus).